The sequence spans 328 residues: Serine/threonine-protein phosphatase PP2A-2 catalytic subunit (328 aa).

Mn(2+) contacts are provided by aspartate 76, histidine 78, aspartate 104, and asparagine 136. Histidine 137 serves as the catalytic Proton donor. Mn(2+)-binding residues include histidine 186 and histidine 260. Residue leucine 328 is modified to Leucine methyl ester.

It belongs to the PPP phosphatase family. PP-2A subfamily. Requires Mn(2+) as cofactor.

It carries out the reaction O-phospho-L-seryl-[protein] + H2O = L-seryl-[protein] + phosphate. The enzyme catalyses O-phospho-L-threonyl-[protein] + H2O = L-threonyl-[protein] + phosphate. The protein is Serine/threonine-protein phosphatase PP2A-2 catalytic subunit (PP2A-2) of Blumeria hordei (Barley powdery mildew).